We begin with the raw amino-acid sequence, 913 residues long: Chitin synthase 1 (913 aa).

The interval 1–27 is disordered; the sequence is MSGAPPPSSGFAPRSYGQQPLSHAPRS. UDP-N-acetyl-alpha-D-glucosamine contacts are provided by Thr237, Glu241, and Asp291. N-linked (GlcNAc...) asparagine glycosylation is present at Asn420. Asp496 is an active-site residue. Residue Asn510 is glycosylated (N-linked (GlcNAc...) asparagine). Transmembrane regions (helical) follow at residues 539–559, 581–601, 625–645, 658–678, 684–704, and 711–731; these read WLNGAFFATLFSIWNWGRIYS, YTAFGFFLPANLYLALFFIVF, AVYIYNFSYLFGLLMLIIIGL, FVGAVFGLMMMLSSLVGAGIF, TVHSIVVSILTVGVYFIASAL, and IFMTFTHYTALIPSFVNIFTI. The Conserved SWG motif motif lies at 741–743; sequence SWG. A run of 2 helical transmembrane segments spans residues 800–820 and 825–845; these read VLLTWAFSNLIFALFVVYFAS and MPVLYIFVASLNTCRLLGSIG. Asn867 and Asn900 each carry an N-linked (GlcNAc...) asparagine glycan.

Belongs to the chitin synthase family. Class II subfamily. As to quaternary structure, homodimer. Mn(2+) serves as cofactor.

It is found in the cell membrane. The enzyme catalyses [(1-&gt;4)-N-acetyl-beta-D-glucosaminyl](n) + UDP-N-acetyl-alpha-D-glucosamine = [(1-&gt;4)-N-acetyl-beta-D-glucosaminyl](n+1) + UDP + H(+). The activity is inhibited by nikkomycin Z (NikZ). Its function is as follows. Polymerizes chitin, a structural polymer of the cell wall and septum, by transferring the sugar moiety of UDP-GlcNAc to the non-reducing end of the growing chitin polymer. Involved in mycelial growth, sporangial production, zoospore release and pathogenesis. The sequence is that of Chitin synthase 1 from Phytophthora sojae (strain P6497) (Soybean stem and root rot agent).